Here is a 157-residue protein sequence, read N- to C-terminus: Protein E6 (157 aa).

2 zinc fingers span residues 41–77 and 114–150; these read CNFC…CRVC and CQTC…CRQC.

The protein belongs to the papillomaviridae E6 protein family. As to quaternary structure, forms homodimers. Interacts with ubiquitin-protein ligase UBE3A/E6-AP; this interaction stimulates UBE3A ubiquitin activity. Interacts with host BAK1.

The protein localises to the host cytoplasm. It localises to the host nucleus. Its function is as follows. Plays a major role in the induction and maintenance of cellular transformation. E6 associates with host UBE3A/E6-AP ubiquitin-protein ligase and modulates its activity. Protects host keratinocytes from apoptosis by mediating the degradation of host BAK1. May also inhibit host immune response. This chain is Protein E6, found in Human papillomavirus type 5b.